The following is a 445-amino-acid chain: MSEHIYSVSQLNQTVRVMLENQLRQVWLTGEISNFTQPVSGHWYLTLKDENAQVRCAMFRMKNMRVSFRPQNGMQVLVHASVSLYEPRGDYQLIIESMHPAGEGLLQQQFEALKMQLAAEGLFAQHLKKSLPPFCKSVGIVTSQTGAALQDILQILRRRDPSLQVVIYPTAVQGKEASAEIVQMIELANRRQEVDALIVGRGGGSLEDLWCFNEEMVARAIFHSQLPIISAVGHETDVTIADFVADLRAPTPSAAAELVSRDQQALLQQLVYQRQRLEMALDRLFKQKDDRLQRLRLRLHNQHPQRQLSAQKQLMQQLAHRLDWSMQAVLQQKQAQLRVLWARVEKNPLPFTLQKQKQDLAQLKVRLDVALKRELTFKHHQFAALCTKLDSISPLKVFARGYSIAQNAQGVAITQLKQVSVGERVITRLADGEIVSQVTDLRPRS.

This sequence belongs to the XseA family. As to quaternary structure, heterooligomer composed of large and small subunits.

It localises to the cytoplasm. The catalysed reaction is Exonucleolytic cleavage in either 5'- to 3'- or 3'- to 5'-direction to yield nucleoside 5'-phosphates.. Bidirectionally degrades single-stranded DNA into large acid-insoluble oligonucleotides, which are then degraded further into small acid-soluble oligonucleotides. The polypeptide is Exodeoxyribonuclease 7 large subunit (Pasteurella multocida (strain Pm70)).